The sequence spans 236 residues: Baculoviral IAP repeat-containing protein 8 (236 aa).

The BIR repeat unit spans residues Trp-7–Leu-70. Positions 39, 42, 59, and 66 each coordinate Zn(2+). The RING-type zinc-finger motif lies at Cys-189 to Asn-224.

Belongs to the IAP family. Binds to caspase-9.

It localises to the cytoplasm. In terms of biological role, protects against apoptosis mediated by BAX. The chain is Baculoviral IAP repeat-containing protein 8 (BIRC8) from Gorilla gorilla gorilla (Western lowland gorilla).